The following is a 102-amino-acid chain: Auxin-responsive protein SAUR68 (102 aa).

The protein belongs to the ARG7 family.

The protein resides in the cell membrane. In terms of biological role, may promote auxin-stimulated organ elongation, such as hypocotyls, stamen filaments and petals. This chain is Auxin-responsive protein SAUR68, found in Arabidopsis thaliana (Mouse-ear cress).